The sequence spans 116 residues: Large ribosomal subunit protein bL20 (116 aa).

This sequence belongs to the bacterial ribosomal protein bL20 family.

Functionally, binds directly to 23S ribosomal RNA and is necessary for the in vitro assembly process of the 50S ribosomal subunit. It is not involved in the protein synthesizing functions of that subunit. The sequence is that of Large ribosomal subunit protein bL20 from Nitratiruptor sp. (strain SB155-2).